A 690-amino-acid chain; its full sequence is BURP domain-containing protein 14 (690 aa).

Residues 1-26 (MAPPRHARLVAATIAVLLCHLPRSAA) form the signal peptide. Positions 134–163 (GSSWSKSSSDGDGAAAAAAPAGGGGGGGGG) are disordered. Low complexity predominate over residues 135–153 (SSWSKSSSDGDGAAAAAAP). Positions 154 to 163 (AGGGGGGGGG) are enriched in gly residues. Asn-178 is a glycosylation site (N-linked (GlcNAc...) asparagine). Residues 201-211 (SNGGGGGGGGV) are compositionally biased toward gly residues. Positions 201 to 232 (SNGGGGGGGGVDSFRRYGKGSQGRNDSFTSYE) are disordered. Residues Asn-225, Asn-317, Asn-379, Asn-432, Asn-450, and Asn-601 are each glycosylated (N-linked (GlcNAc...) asparagine). The region spanning 477 to 689 (FFRERDLVAG…FQGDMTWTVA (213 aa)) is the BURP domain.

Expressed in panicles.

In Oryza sativa subsp. japonica (Rice), this protein is BURP domain-containing protein 14 (BURP14).